The following is a 115-amino-acid chain: uncharacterized protein (115 aa).

This is an uncharacterized protein from Treponema pallidum (strain Nichols).